The following is a 62-amino-acid chain: Short neurotoxin C (62 aa).

Residues 1 to 16 show a composition bias toward polar residues; the sequence is RRCFNQQSSQPQTNKS. The interval 1-22 is disordered; it reads RRCFNQQSSQPQTNKSCPPGEN. 4 cysteine pairs are disulfide-bonded: Cys-3-Cys-24, Cys-17-Cys-41, Cys-43-Cys-54, and Cys-55-Cys-60.

The protein belongs to the three-finger toxin family. Short-chain subfamily. Type I alpha-neurotoxin sub-subfamily. Expressed by the venom gland.

The protein resides in the secreted. Functionally, binds to muscle nicotinic acetylcholine receptor (nAChR) and inhibit acetylcholine from binding to the receptor, thereby impairing neuromuscular transmission. This Laticauda laticaudata (Blue-ringed sea krait) protein is Short neurotoxin C.